The sequence spans 296 residues: UBX domain-containing protein 1-A (296 aa).

The UBA domain maps to 1-42 (MAECSTLESLIEMGFSSTRAEKALTATGNQGIEPAMDWLVEH). The tract at residues 43-216 (EDDPDIDEPS…VQEPPTKKEY (174 aa)) is disordered. Low complexity predominate over residues 61 to 75 (TDTADTTDTTDTTDT). Composition is skewed to basic and acidic residues over residues 86–100 (PLTEEEKEKQTKRMM), 107–123 (QNEREEREKKERIEQEK), and 138–178 (KMQE…DRAR). A coiled-coil region spans residues 87 to 177 (LTEEEKEKQT…KIARDKADRA (91 aa)). Residues 191 to 206 (PAETSIPATTPSPSSP) show a composition bias toward low complexity. Residues 214–293 (KEYDQCRIQV…GLVPTAVLIV (80 aa)) enclose the UBX domain.

It localises to the cytoplasm. Component of a complex required to couple deglycosylation and proteasome-mediated degradation of misfolded proteins in the endoplasmic reticulum that are retrotranslocated in the cytosol. Involved in ubiquitin-proteasome systems. The chain is UBX domain-containing protein 1-A (ubxn1-a) from Xenopus laevis (African clawed frog).